Consider the following 328-residue polypeptide: Delta-aminolevulinic acid dehydratase (328 aa).

The active-site Schiff-base intermediate with substrate is the Lys200. 5-aminolevulinate is bound by residues Arg210 and Lys222. Mg(2+) is bound at residue Glu238. The active-site Schiff-base intermediate with substrate is Lys253. Residues Ser279 and Tyr318 each coordinate 5-aminolevulinate.

Belongs to the ALAD family. As to quaternary structure, homooctamer.

It carries out the reaction 2 5-aminolevulinate = porphobilinogen + 2 H2O + H(+). It functions in the pathway porphyrin-containing compound metabolism; protoporphyrin-IX biosynthesis; coproporphyrinogen-III from 5-aminolevulinate: step 1/4. Stimulated by magnesium, inhibited by zinc. Catalyzes an early step in the biosynthesis of tetrapyrroles. Binds two molecules of 5-aminolevulinate per subunit, each at a distinct site, and catalyzes their condensation to form porphobilinogen. In Chlorobaculum tepidum (strain ATCC 49652 / DSM 12025 / NBRC 103806 / TLS) (Chlorobium tepidum), this protein is Delta-aminolevulinic acid dehydratase (hemB).